The following is a 373-amino-acid chain: Anhydro-N-acetylmuramic acid kinase (373 aa).

12–19 (GTSLDGVD) serves as a coordination point for ATP.

It belongs to the anhydro-N-acetylmuramic acid kinase family.

It carries out the reaction 1,6-anhydro-N-acetyl-beta-muramate + ATP + H2O = N-acetyl-D-muramate 6-phosphate + ADP + H(+). The protein operates within amino-sugar metabolism; 1,6-anhydro-N-acetylmuramate degradation. It functions in the pathway cell wall biogenesis; peptidoglycan recycling. Its function is as follows. Catalyzes the specific phosphorylation of 1,6-anhydro-N-acetylmuramic acid (anhMurNAc) with the simultaneous cleavage of the 1,6-anhydro ring, generating MurNAc-6-P. Is required for the utilization of anhMurNAc either imported from the medium or derived from its own cell wall murein, and thus plays a role in cell wall recycling. The polypeptide is Anhydro-N-acetylmuramic acid kinase (Salmonella newport (strain SL254)).